The following is a 321-amino-acid chain: Protease HtpX homolog (321 aa).

The next 2 helical transmembrane spans lie at 6–26 and 28–48; these read TAMLLAFMTALFMGVGFLIGG and GGMMIALLIAAGMNLFSYWNS. H130 serves as a coordination point for Zn(2+). E131 is an active-site residue. H134 provides a ligand contact to Zn(2+). 2 helical membrane-spanning segments follow: residues 145–165 and 173–193; these read ITATLAGAISMLGNFAFFFGG and PLGFIGVLVAMIVAPLAAMLV. Residue E202 coordinates Zn(2+). The interval 281–321 is disordered; the sequence is EFSPRASTPPPSGDRPVRKSGSVPTTGWRRGNENERKGPWS. Over residues 310–321 the composition is skewed to basic and acidic residues; that stretch reads RGNENERKGPWS.

Belongs to the peptidase M48B family. Zn(2+) is required as a cofactor.

It localises to the cell inner membrane. The chain is Protease HtpX homolog from Agrobacterium fabrum (strain C58 / ATCC 33970) (Agrobacterium tumefaciens (strain C58)).